A 214-amino-acid polypeptide reads, in one-letter code: Large ribosomal subunit protein uL3 (214 aa).

Residues 133–155 (ATHGNSRSHRVPGSTGQCQSPGR) are disordered. Q151 carries the post-translational modification N5-methylglutamine.

The protein belongs to the universal ribosomal protein uL3 family. Part of the 50S ribosomal subunit. Forms a cluster with proteins L14 and L19. In terms of processing, methylated by PrmB.

One of the primary rRNA binding proteins, it binds directly near the 3'-end of the 23S rRNA, where it nucleates assembly of the 50S subunit. The chain is Large ribosomal subunit protein uL3 from Cellvibrio japonicus (strain Ueda107) (Pseudomonas fluorescens subsp. cellulosa).